Here is a 359-residue protein sequence, read N- to C-terminus: Histamine H2 receptor (359 aa).

At 1–22 the chain is on the extracellular side; it reads MAFNGTVPSFCMDFTVYKVTIS. Asn-4 is a glycosylation site (N-linked (GlcNAc...) asparagine). A helical membrane pass occupies residues 23–44; sequence VILIILILVTVAGNVVVCLAVG. Residues 45-57 lie on the Cytoplasmic side of the membrane; the sequence is LNRRLRSLTNCFI. Residues 58–81 form a helical membrane-spanning segment; it reads VSLAVTDLLLGLLVLPFSAIYQLS. Over 82–92 the chain is Extracellular; sequence CKWSFSKVFCN. Cys-91 and Cys-174 are oxidised to a cystine. A helical transmembrane segment spans residues 93-114; the sequence is IYTSLDVMLCTASILNLFMISL. Over 115-134 the chain is Cytoplasmic; the sequence is DRYCAVTDPLRYPVLITPAR. Residues 135–159 form a helical membrane-spanning segment; that stretch reads VAISLVFIWVISITLSFLSIHLGWN. The Extracellular segment spans residues 160–180; that stretch reads SRNETSKDNDTIVKCKVQVNE. The chain crosses the membrane as a helical span at residues 181–204; it reads VYGLVDGLVTFYLPLLIMCITYFR. Over 205 to 234 the chain is Cytoplasmic; that stretch reads IFKIAREQARRINHIGSWKAATIREHKATV. Residues 235–258 form a helical membrane-spanning segment; that stretch reads TLAAVMGAFIICWFPYFTVFVYRG. Residues 259–267 are Extracellular-facing; it reads LKGDDAVNE. A helical transmembrane segment spans residues 268–289; sequence VFEDVVLWLGYANSALNPILYA. At 290–359 the chain is on the cytoplasmic side; sequence ALNRDFRTAY…VTAPQGATNR (70 aa). Cys-305 carries the S-palmitoyl cysteine lipid modification.

This sequence belongs to the G-protein coupled receptor 1 family.

The protein resides in the cell membrane. Its function is as follows. The H2 subclass of histamine receptors mediates gastric acid secretion. The activity of this receptor is mediated by G proteins which activate adenylyl cyclase. This is Histamine H2 receptor (HRH2) from Cavia porcellus (Guinea pig).